Here is a 229-residue protein sequence, read N- to C-terminus: MARLKVKVWGEYACFSRPEFKVERVSYPVPTPSAARGLLEAIFWKPEFRYEVRRIGVLRLGTPFALLRNEVGNRMGAKPFFVEDARQQRTSLVLKDVAYLVEADMVLRPHATDPLPKYLEQFERRLKKGQYHHTPYLGTREFPAYFSPPDGEVPDGGLNLDLGPMLFDLAFVEDPGRPELTFKRPGRGEVQGYALPLFFHARIREGWLEVPAEKYQELYRLEEGHAKGA.

This sequence belongs to the CRISPR-associated protein Cas5 family. Subtype I-C/Dvulg subfamily. The cofactor is Does not require a metal cofactor..

Its function is as follows. CRISPR (clustered regularly interspaced short palindromic repeat) is an adaptive immune system that provides protection against mobile genetic elements (viruses, transposable elements and conjugative plasmids). CRISPR clusters contain spacers, sequences complementary to antecedent mobile elements, and target invading nucleic acids. CRISPR clusters are transcribed and processed into CRISPR RNA (crRNA). This protein is a sequence-specific endonuclease that cleaves pre-crRNA into mature crRNA, possibly by an intramolecular attack of the 2'-hydroxyl group of G26 on the scissile phosphodiester, cutting the precursor 3' to G26 residue yielding 5'-hydroxyl and 2' and/or 3' ends lacking a hydroxyl group (perhaps a 2'/3' cyclic phosphodiester). Requires between 4 and 8 nt downstream of the cleavage site for both binding and cleavage of pre-crRNA. Substitution with dG at this position abolishes cleavage but not RNA binding. Does not cleave pre-crRNA associated with the M.succiniciproducens strain MBEL55E Cas5 protein (AC Q65TW5) CRISPR locus. The polypeptide is CRISPR pre-crRNA endoribonuclease Cas5d (Thermus thermophilus (strain ATCC BAA-163 / DSM 7039 / HB27)).